A 269-amino-acid chain; its full sequence is Putative biopolymer transport protein ExbD (269 aa).

The Cytoplasmic portion of the chain corresponds to 1–40 (MASSPKAPKSHRKFQSIYHPTRPLSLWQDNQHDQGEVRIE). The chain crosses the membrane as a helical span at residues 41–61 (IIPLIDVVFCILTFFILGAVG). At 62-269 (LSRQQAISLD…GNTVPSAPQQ (208 aa)) the chain is on the periplasmic side. Residues 190–269 (NGANPGMSNF…GNTVPSAPQQ (80 aa)) are disordered. Over residues 193 to 204 (NPGMSNFNNSNP) the composition is skewed to low complexity.

This sequence belongs to the ExbD/TolR family.

It localises to the cell inner membrane. In Synechocystis sp. (strain ATCC 27184 / PCC 6803 / Kazusa), this protein is Putative biopolymer transport protein ExbD.